Reading from the N-terminus, the 430-residue chain is Probable beta-1,3-galactosyl-O-glycosyl-glycoprotein beta-1,6-N-acetylglucosaminyltransferase 7 (430 aa).

At M1–K8 the chain is on the cytoplasmic side. Residues S9–L25 form a helical; Signal-anchor for type II membrane protein membrane-spanning segment. Over R26–R430 the chain is Extracellular. 4 disulfides stabilise this stretch: C53–C205, C139–C354, C160–C187, and C363–C395. A glycan (N-linked (GlcNAc...) asparagine) is linked at N87. An N-linked (GlcNAc...) asparagine glycan is attached at N272.

The protein belongs to the glycosyltransferase 14 family.

Its subcellular location is the golgi apparatus membrane. The protein operates within protein modification; protein glycosylation. Functionally, probable glycosyltransferase. This Homo sapiens (Human) protein is Probable beta-1,3-galactosyl-O-glycosyl-glycoprotein beta-1,6-N-acetylglucosaminyltransferase 7.